The sequence spans 190 residues: 3-isopropylmalate dehydratase small subunit (190 aa).

The protein belongs to the LeuD family. LeuD type 1 subfamily. In terms of assembly, heterodimer of LeuC and LeuD.

The enzyme catalyses (2R,3S)-3-isopropylmalate = (2S)-2-isopropylmalate. The protein operates within amino-acid biosynthesis; L-leucine biosynthesis; L-leucine from 3-methyl-2-oxobutanoate: step 2/4. Catalyzes the isomerization between 2-isopropylmalate and 3-isopropylmalate, via the formation of 2-isopropylmaleate. This Staphylococcus aureus (strain JH1) protein is 3-isopropylmalate dehydratase small subunit.